The chain runs to 763 residues: MEQNTDSMVPLPDPSQATKLTSWKNELSLQALKADLDAAKPSHTAMMIKVKEWNDLMRIEGKAKPPKVKGRSQVQPKLVRRQAEWRYSALTEPFLGSNKLFKVTPVTWEDVQGARQNELVLNYQFRTKLNRVSFIDNYVRSVVDDGTGIVRVGWNREIRKEKQEVPVFSLFPIQTQEQADALQQALQLRTDNPRGYEENVDEAIKESVRFFDETGQATYAVQTGTTTTEVEVPLANHPTVEMLNPENIIIDPSCQGDINKAMFAIVSFETCKADLLKEKDRYHNLNKIDWQSSAPVNEPDHATTTPQEFQISDPMRKRVVAYEYWGFWDIEGNGVLEPIVATWIGSTLIRLEKNPYPDGKLPFVLIPYMPVKRDMYGEPDAELLGDNQAVLGAVMRGMIDLLGRSANGQRGMPKGMLDALNSRRYREGEDYEYNPTQNPAQMIIEHKFPELPQSALTMATLQNQEAESLTGVKAFAGGVTGESYGDVAAGIRGVLDAASKREMAILRRLAKGMSEIGNKIIAMNAVFLAEHEVVRITNEEFVTIKREDLKGNFDLEVDISTAEVDNQKSQDLGFMLQTIGPNVDQQITLNILAEIADLKRMPKLAHDLRTWQPQPDPVQEQLKQLAVEKAQLENEELRSKIRLNDAQAQKAMAERDNKNLDYLEQESGTKHARDLEKMKAQSQGNQQLEITKALTKPRKEGELPPNLSAAIGYNALTNGEDTGIQSVSERDIAAEANPAYSLGSSQFDPTRDPALNPGIRLGN.

The span at 668 to 679 shows a compositional bias: basic and acidic residues; sequence GTKHARDLEKMK. Disordered stretches follow at residues 668-706 and 729-763; these read GTKHARDLEKMKAQSQGNQQLEITKALTKPRKEGELPPN and ERDIAAEANPAYSLGSSQFDPTRDPALNPGIRLGN. Positions 680 to 689 are enriched in polar residues; sequence AQSQGNQQLE.

In terms of assembly, homododecamer.

The protein resides in the virion. Functionally, forms the portal vertex of the capsid. This portal plays critical roles in head assembly, genome packaging, neck/tail attachment, and genome ejection. The portal protein multimerizes as a single ring-shaped homododecamer arranged around a central channel. This Escherichia coli (Bacteriophage N4) protein is Probable portal protein (59).